A 469-amino-acid polypeptide reads, in one-letter code: ATP synthase subunit beta (469 aa).

156-163 lines the ATP pocket; that stretch reads GGAGVGKT.

This sequence belongs to the ATPase alpha/beta chains family. In terms of assembly, F-type ATPases have 2 components, CF(1) - the catalytic core - and CF(0) - the membrane proton channel. CF(1) has five subunits: alpha(3), beta(3), gamma(1), delta(1), epsilon(1). CF(0) has three main subunits: a(1), b(2) and c(9-12). The alpha and beta chains form an alternating ring which encloses part of the gamma chain. CF(1) is attached to CF(0) by a central stalk formed by the gamma and epsilon chains, while a peripheral stalk is formed by the delta and b chains.

The protein resides in the cell membrane. The catalysed reaction is ATP + H2O + 4 H(+)(in) = ADP + phosphate + 5 H(+)(out). Its function is as follows. Produces ATP from ADP in the presence of a proton gradient across the membrane. The catalytic sites are hosted primarily by the beta subunits. The protein is ATP synthase subunit beta of Bacillus cereus (strain AH820).